Consider the following 1058-residue polypeptide: Protein translocase subunit SECA2, chloroplastic (1058 aa).

The transit peptide at 1 to 58 (MGSVSNLVSPNICHPAPPCLTSRSNKFPWTKPISGLLFYRSVTPIKRCHLVRRSCVVS) directs the protein to the chloroplast. 167–174 (MKTGEGKT) is a binding site for ATP.

It belongs to the SecA family. In terms of assembly, part of a second Sec protein translocation apparatus. Interacts probably with SCY2.

The protein resides in the plastid. Its subcellular location is the chloroplast membrane. It catalyses the reaction ATP + H2O + chloroplast-proteinSide 1 = ADP + phosphate + chloroplast-proteinSide 2.. Its function is as follows. Involved in protein export. Probably interacts with other proteins to allow the postimport or conservative sorting pathway for inner membrane proteins in plastids. May have a central role in coupling the hydrolysis of ATP to the transfer of proteins across the membrane. This chain is Protein translocase subunit SECA2, chloroplastic, found in Arabidopsis thaliana (Mouse-ear cress).